A 65-amino-acid chain; its full sequence is Muscarinic toxin-like protein 1 (65 aa).

Cystine bridges form between Cys3–Cys24, Cys17–Cys42, Cys46–Cys57, and Cys58–Cys63.

This sequence belongs to the three-finger toxin family. Short-chain subfamily. Type C muscarinic toxin sub-subfamily. As to quaternary structure, monomer. Expressed by the venom gland.

It localises to the secreted. Its function is as follows. Binds weakly to the muscarinic acetylcholine receptor (CHRM). The sequence is that of Muscarinic toxin-like protein 1 from Naja kaouthia (Monocled cobra).